The primary structure comprises 81 residues: Short neurotoxin SN160 (81 aa).

Residues 1–21 (MKTLLLTLVVVTIVCLDLGYT) form the signal peptide. 4 cysteine pairs are disulfide-bonded: cysteine 24–cysteine 43, cysteine 38–cysteine 60, cysteine 62–cysteine 73, and cysteine 74–cysteine 79.

The protein belongs to the three-finger toxin family. Short-chain subfamily. Type I alpha-neurotoxin sub-subfamily. Expressed by the venom gland.

The protein resides in the secreted. Binds to muscle nicotinic acetylcholine receptor (nAChR) and inhibit acetylcholine from binding to the receptor, thereby impairing neuromuscular transmission. This Hydrophis hardwickii (Hardwick's spine-bellied seasnake) protein is Short neurotoxin SN160.